Consider the following 541-residue polypeptide: Tegument protein UL21 homolog (541 aa).

The protein belongs to the alphaherpesvirinae UL21 protein family. As to quaternary structure, interacts (via C-terminus) with UL16.

Its subcellular location is the virion tegument. It is found in the host cytoplasm. It localises to the host nucleus. In terms of biological role, may participate in DNA packaging/capsid maturation events. Promotes efficient incorporation of tegument proteins UL46, UL49, and US3 homologs into virions. May also play a role in capsid transport to the trans-Golgi network (TGN). This Varicella-zoster virus (strain Oka vaccine) (HHV-3) protein is Tegument protein UL21 homolog.